A 101-amino-acid chain; its full sequence is Small ribosomal subunit protein uS14c (101 aa).

The protein belongs to the universal ribosomal protein uS14 family. As to quaternary structure, part of the 30S ribosomal subunit.

It is found in the plastid. In terms of biological role, binds 16S rRNA, required for the assembly of 30S particles. The chain is Small ribosomal subunit protein uS14c from Helicosporidium sp. subsp. Simulium jonesii (Green alga).